The sequence spans 179 residues: Large ribosomal subunit protein uL5 (179 aa).

This sequence belongs to the universal ribosomal protein uL5 family. In terms of assembly, part of the 50S ribosomal subunit; part of the 5S rRNA/L5/L18/L25 subcomplex. Contacts the 5S rRNA and the P site tRNA. Forms a bridge to the 30S subunit in the 70S ribosome.

Functionally, this is one of the proteins that bind and probably mediate the attachment of the 5S RNA into the large ribosomal subunit, where it forms part of the central protuberance. In the 70S ribosome it contacts protein S13 of the 30S subunit (bridge B1b), connecting the 2 subunits; this bridge is implicated in subunit movement. Contacts the P site tRNA; the 5S rRNA and some of its associated proteins might help stabilize positioning of ribosome-bound tRNAs. The protein is Large ribosomal subunit protein uL5 of Neisseria meningitidis serogroup A / serotype 4A (strain DSM 15465 / Z2491).